Consider the following 216-residue polypeptide: Probable GTP-binding protein EngB (216 aa).

The region spanning 26–200 is the EngB-type G domain; sequence EGIEIAFAGR…RAKLDTWFAP (175 aa). GTP is bound by residues 34 to 41, 61 to 65, 79 to 82, 146 to 149, and 179 to 181; these read GRSNAGKS, GRTQL, DLPG, TKAD, and YSS. Mg(2+) is bound by residues Ser41 and Thr63.

This sequence belongs to the TRAFAC class TrmE-Era-EngA-EngB-Septin-like GTPase superfamily. EngB GTPase family. It depends on Mg(2+) as a cofactor.

Its function is as follows. Necessary for normal cell division and for the maintenance of normal septation. The chain is Probable GTP-binding protein EngB from Vibrio vulnificus (strain YJ016).